The chain runs to 1257 residues: Phosphatidylinositol 3,4,5-trisphosphate 5-phosphatase 2 (1257 aa).

The SH2 domain maps to Trp-21–Val-117. A compositionally biased stretch (basic and acidic residues) spans Gly-119–Ser-132. A disordered region spans residues Gly-119 to Val-181. Ser-132 carries the post-translational modification Phosphoserine. Positions Pro-156–Pro-166 are enriched in pro residues. The residue at position 165 (Thr-165) is a Phosphothreonine. Phosphoserine occurs at positions 241 and 353. A Phosphotyrosine modification is found at Tyr-887. Ser-891 carries the post-translational modification Phosphoserine. Positions Thr-897–Ala-986 are disordered. The span at Pro-939–Ala-951 shows a compositional bias: pro residues. The SH3-binding signature appears at Pro-945 to Arg-950. A compositionally biased stretch (basic and acidic residues) spans Val-952 to Gly-966. Positions Asn-984 to Tyr-987 match the NPXY motif motif. Tyr-987 is subject to Phosphotyrosine. Positions Ser-1004 to Ala-1115 are disordered. Composition is skewed to pro residues over residues Leu-1049–Pro-1060 and Gly-1088–Thr-1104. The residue at position 1132 (Ser-1132) is a Phosphoserine. A phosphotyrosine mark is found at Tyr-1136 and Tyr-1161. In terms of domain architecture, SAM spans Leu-1195–Lys-1257. Ser-1256 is modified (phosphoserine).

This sequence belongs to the inositol 1,4,5-trisphosphate 5-phosphatase family. Interacts with tyrosine phosphorylated form of SHC1. Interacts with EGFR. Upon stimulation by the EGF signaling pathway, it forms a complex with SHC1 and EGFR. Interacts with cytoskeletal protein SORBS3/vinexin, promoting its localization to the periphery of cells. Forms a complex with filamin (FLNA or FLNB), actin, GPIb (GP1BA or GP1BB) that regulates cortical and submembraneous actin. Interacts with c-Met/MET, when c-Met/MET is phosphorylated on 'Tyr-1356'. Interacts with p130Cas/BCAR1. Interacts with CENTD3/ARAP3 via its SAM domain. Interacts with c-Cbl/CBL and CAP/SORBS1. Interacts with activated EPHA2 receptor. Interacts with receptors FCGR2A. Interacts with FCGR2B. Interacts with tyrosine kinase ABL1. Interacts with tyrosine kinase TEC. Interacts with CSF1R. Interacts (via N-terminus) with SH3YL1 (via SH3 domain). Interacts (via SH2 domain) with tyrosine phosphorylated KLRC1 (via ITIM). Interacts with NEDD9/HEF1. In terms of processing, tyrosine phosphorylated by the members of the SRC family after exposure to a diverse array of extracellular stimuli such as insulin, growth factors such as EGF or PDGF, chemokines, integrin ligands and hypertonic and oxidative stress. May be phosphorylated upon IgG receptor FCGR2B-binding. Phosphorylated at Tyr-987 following cell attachment and spreading. Phosphorylated at Tyr-1161 following EGF signaling pathway stimulation.

Its subcellular location is the cytoplasm. The protein resides in the cytosol. It localises to the cytoskeleton. The protein localises to the membrane. It is found in the cell projection. Its subcellular location is the filopodium. The protein resides in the lamellipodium. It localises to the basal cell membrane. The protein localises to the nucleus. It is found in the nucleus speckle. Its subcellular location is the spindle pole. It catalyses the reaction a 1,2-diacyl-sn-glycero-3-phospho-(1D-myo-inositol-3,4,5-trisphosphate) + H2O = a 1,2-diacyl-sn-glycero-3-phospho-(1D-myo-inositol-3,4-bisphosphate) + phosphate. The enzyme catalyses 1,2-dioctanoyl-sn-glycero-3-phospho-(1D-myo-inositol-3,4,5-trisphosphate) + H2O = 1,2-dioctanoyl-sn-glycero-3-phospho-(1D-myo-inositol-3,4-bisphosphate) + phosphate. It carries out the reaction 1,2-dihexadecanoyl-sn-glycero-3-phospho-(1D-myo-inositol-3,4,5-trisphosphate) + H2O = 1,2-dihexadecanoyl-sn-glycero-3-phospho-(1D-myo-inositol-3,4-bisphosphate) + phosphate. Its activity is regulated as follows. Activated upon translocation to the sites of synthesis of PtdIns(3,4,5)P3 in the membrane. Enzymatic activity is enhanced in the presence of phosphatidylserine. Its function is as follows. Phosphatidylinositol (PtdIns) phosphatase that specifically hydrolyzes the 5-phosphate of phosphatidylinositol-3,4,5-trisphosphate (PtdIns(3,4,5)P3) to produce PtdIns(3,4)P2, thereby negatively regulating the PI3K (phosphoinositide 3-kinase) pathways. Required for correct mitotic spindle orientation and therefore progression of mitosis. Plays a central role in regulation of PI3K-dependent insulin signaling, although the precise molecular mechanisms and signaling pathways remain unclear. While overexpression reduces both insulin-stimulated MAP kinase and Akt activation, its absence does not affect insulin signaling or GLUT4 trafficking. Confers resistance to dietary obesity. May act by regulating AKT2, but not AKT1, phosphorylation at the plasma membrane. Part of a signaling pathway that regulates actin cytoskeleton remodeling. Required for the maintenance and dynamic remodeling of actin structures as well as in endocytosis, having a major impact on ligand-induced EGFR internalization and degradation. Participates in regulation of cortical and submembraneous actin by hydrolyzing PtdIns(3,4,5)P3 thereby regulating membrane ruffling. Regulates cell adhesion and cell spreading. Required for HGF-mediated lamellipodium formation, cell scattering and spreading. Acts as a negative regulator of EPHA2 receptor endocytosis by inhibiting via PI3K-dependent Rac1 activation. Acts as a regulator of neuritogenesis by regulating PtdIns(3,4,5)P3 level and is required to form an initial protrusive pattern, and later, maintain proper neurite outgrowth. Acts as a negative regulator of the FC-gamma-RIIA receptor (FCGR2A). Mediates signaling from the FC-gamma-RIIB receptor (FCGR2B), playing a central role in terminating signal transduction from activating immune/hematopoietic cell receptor systems. Involved in EGF signaling pathway. Upon stimulation by EGF, it is recruited by EGFR and dephosphorylates PtdIns(3,4,5)P3. Plays a negative role in regulating the PI3K-PKB pathway, possibly by inhibiting PKB activity. Down-regulates Fc-gamma-R-mediated phagocytosis in macrophages independently of INPP5D/SHIP1. In macrophages, down-regulates NF-kappa-B-dependent gene transcription by regulating macrophage colony-stimulating factor (M-CSF)-induced signaling. Plays a role in the localization of AURKA and NEDD9/HEF1 to the basolateral membrane at interphase in polarized cysts, thereby mediates cell cycle homeostasis, cell polarization and cilia assembly. Additionally promotion of cilia growth is also facilitated by hydrolysis of (PtdIns(3,4,5)P3) to PtdIns(3,4)P2. Promotes formation of apical membrane-initiation sites during the initial stages of lumen formation via Rho family-induced actin filament organization and CTNNB1 localization to cell-cell contacts. May also hydrolyze PtdIns(1,3,4,5)P4, and could thus affect the levels of the higher inositol polyphosphates like InsP6. Involved in endochondral ossification. This is Phosphatidylinositol 3,4,5-trisphosphate 5-phosphatase 2 from Rattus norvegicus (Rat).